Here is a 312-residue protein sequence, read N- to C-terminus: Tyrosine recombinase XerC (312 aa).

One can recognise a Core-binding (CB) domain in the interval 1 to 103 (MIASIYSFLD…SIKSFAHYCV (103 aa)). One can recognise a Tyr recombinase domain in the interval 124–306 (ELPSPMTYAQ…SVKLKKQTHQ (183 aa)). Residues Arg-164, Lys-188, His-258, Arg-261, and His-284 contribute to the active site. Tyr-293 serves as the catalytic O-(3'-phospho-DNA)-tyrosine intermediate.

It belongs to the 'phage' integrase family. XerC subfamily. In terms of assembly, forms a cyclic heterotetrameric complex composed of two molecules of XerC and two molecules of XerD.

The protein resides in the cytoplasm. Its function is as follows. Site-specific tyrosine recombinase, which acts by catalyzing the cutting and rejoining of the recombining DNA molecules. The XerC-XerD complex is essential to convert dimers of the bacterial chromosome into monomers to permit their segregation at cell division. It also contributes to the segregational stability of plasmids. This is Tyrosine recombinase XerC from Chlamydia pneumoniae (Chlamydophila pneumoniae).